The sequence spans 905 residues: Tight junction protein ZO-3 (905 aa).

The PDZ 1 domain maps to 11 to 93 (TATLYKDPRR…TANVTVKRPR (83 aa)). The interval 92–167 (PRRVQLPATK…GGGSEANGLD (76 aa)) is disordered. Phosphoserine occurs at positions 111 and 128. Positions 124–133 (GDSSSGSGRS) are enriched in low complexity. Positions 139–155 (RRSRAGRRGRVGSHGRR) are enriched in basic residues. S156, S157, S161, S195, and S311 each carry phosphoserine. In terms of domain architecture, PDZ 2 spans 187 to 264 (SVLVKRRNSE…ELTLLVLRDS (78 aa)). Residues 289–367 (LTSELSQAPP…QSLEDRGYSP (79 aa)) are disordered. The residue at position 317 (T317) is a Phosphothreonine. Phosphoserine occurs at positions 319, 343, and 359. The 67-residue stretch at 368–434 (DTRVVSFPKG…LTREEAVQFL (67 aa)) folds into the PDZ 3 domain. In terms of domain architecture, SH3 spans 464-541 (GDSFYIRTHF…PNQSRAEQLA (78 aa)). Residues 573–754 (RRGTKKASTQ…WYQEVKAVIQ (182 aa)) enclose the Guanylate kinase-like domain. At S584 the chain carries Phosphoserine. 2 disordered regions span residues 773–818 (EDLD…PQDV) and 850–905 (TDKW…ATDL). Residues 851–877 (DKWETQADSHYTQDQRRQDSMRTYKHE) are compositionally biased toward basic and acidic residues. Phosphoserine is present on residues S891 and S892.

It belongs to the MAGUK family. In terms of assembly, interacts with occludin OCLN, claudins and TPJ1. Interacts with PATJ. Interacts with UBN1. Interacts with FASLG. Interacts with CCND1. In terms of processing, phosphorylated. As to expression, is concentrated in various types of epithelium, in tissues such as the lung, liver and kidney, but not in endothelium or at cadherin-based cell-cell adhesion sites.

The protein resides in the cell membrane. Its subcellular location is the cell junction. The protein localises to the tight junction. It is found in the nucleus. Functionally, tjp1, Tjp2, and Tjp3 are closely related scaffolding proteins that link tight junction (TJ) transmembrane proteins such as claudins, junctional adhesion molecules, and occludin to the actin cytoskeleton. The tight junction acts to limit movement of substances through the paracellular space and as a boundary between the compositionally distinct apical and basolateral plasma membrane domains of epithelial and endothelial cells. Binds and recruits PatJ to tight junctions where it connects and stabilizes apical and lateral components of tight junctions. Promotes cell-cycle progression through the sequestration of cyclin D1 (Ccnd1) at tight junctions during mitosis which prevents Ccnd1 degradation during M-phase and enables S-phase transition. With Tjp1 and Tjp2, participates in the junctional retention and stability of the transcription factor DbpA, but is not involved in its shuttling to the nucleus. Contrary to Tjp2, Tjp3 is dispensable for individual viability, embryonic development, epithelial differentiation, and the establishment of TJs, at least in the laboratory environment. The protein is Tight junction protein ZO-3 (Tjp3) of Mus musculus (Mouse).